The chain runs to 203 residues: Probable proteasome subunit beta type-1 (203 aa).

The propeptide at 1 to 10 is removed in mature form; it reads MMSNEKEMTG. Catalysis depends on T11, which acts as the Nucleophile.

This sequence belongs to the peptidase T1B family. As to quaternary structure, the 26S proteasome consists of a 20S proteasome core and two 19S regulatory subunits. The 20S proteasome core is composed of 28 subunits that are arranged in four stacked rings, resulting in a barrel-shaped structure. The two end rings are each formed by seven alpha subunits, and the two central rings are each formed by seven beta subunits. The catalytic chamber with the active sites is on the inside of the barrel.

The protein resides in the cytoplasm. It localises to the nucleus. The enzyme catalyses Cleavage of peptide bonds with very broad specificity.. Functionally, the proteasome degrades poly-ubiquitinated proteins in the cytoplasm and in the nucleus. It is essential for the regulated turnover of proteins and for the removal of misfolded proteins. The proteasome is a multicatalytic proteinase complex that is characterized by its ability to cleave peptides with Arg, Phe, Tyr, Leu, and Glu adjacent to the leaving group at neutral or slightly basic pH. It has an ATP-dependent proteolytic activity. In Encephalitozoon cuniculi (strain GB-M1) (Microsporidian parasite), this protein is Probable proteasome subunit beta type-1 (PRE3).